Reading from the N-terminus, the 485-residue chain is Peptidyl-prolyl isomerase CWC27 (485 aa).

The region spanning 11 to 167 (SSGLVDLVTS…YPIKLHEVRV (157 aa)) is the PPIase cyclophilin-type domain. The disordered stretch occupies residues 173 to 485 (DDLQPRTTKK…PQQRRQRSII (313 aa)). 2 stretches are compositionally biased toward basic and acidic residues: residues 184 to 204 (RIAEERRKKHEMETRVAEEQK) and 236 to 247 (SSHDLLKDDKHL). 4 stretches are compositionally biased toward polar residues: residues 249–270 (RQTIETSKSTKANTPAVSANIS), 278–292 (AQSSSSTTPPAVTKQ), 315–325 (PSDQKASSSTG), and 353–370 (ALLSFQSRLRTRPSSTTP). Residues 381–398 (DEVEEEAGEYGASDDDDD) are compositionally biased toward acidic residues. Residues 428-465 (LDPRDHTDRERNPKAESSRDGKRGRDWVEHDRKYQNDR) show a composition bias toward basic and acidic residues. Residues 466–485 (SRRHREHDKHPQQRRQRSII) show a composition bias toward basic residues.

This sequence belongs to the cyclophilin-type PPIase family. CWC27 subfamily. Associated with the spliceosome.

The protein resides in the cytoplasm. It is found in the nucleus. It catalyses the reaction [protein]-peptidylproline (omega=180) = [protein]-peptidylproline (omega=0). PPIases accelerate the folding of proteins. It catalyzes the cis-trans isomerization of proline imidic peptide bonds in oligopeptides. Involved in pre-mRNA splicing. The polypeptide is Peptidyl-prolyl isomerase CWC27 (CWC27) (Mycosarcoma maydis (Corn smut fungus)).